The primary structure comprises 138 residues: Small ribosomal subunit protein uS11c (138 aa).

Residues 1-22 (MAKPILRIGSRKNTRSGSRKNV) are disordered. Over residues 9 to 22 (GSRKNTRSGSRKNV) the composition is skewed to basic residues.

Belongs to the universal ribosomal protein uS11 family. As to quaternary structure, part of the 30S ribosomal subunit.

The protein resides in the plastid. The protein localises to the chloroplast. The polypeptide is Small ribosomal subunit protein uS11c (Arabis hirsuta (Hairy rock-cress)).